The sequence spans 488 residues: RuvB-like helicase 1 (488 aa).

Residues 1–11 are compositionally biased toward polar residues; the sequence is MATANTSSGSM. The disordered stretch occupies residues 1 to 29; the sequence is MATANTSSGSMNGVGPVTMDSSTSGASRE. ATP is bound at residue 87 to 94; that stretch reads GGPGTGKT.

It belongs to the RuvB family. May form heterododecamers with RVB2. Component of the SWR1 chromatin remodeling complex, the INO80 chromatin remodeling complex, and of the R2TP complex.

The protein localises to the nucleus. The enzyme catalyses ATP + H2O = ADP + phosphate + H(+). Its function is as follows. DNA helicase which participates in several chromatin remodeling complexes, including the SWR1 and the INO80 complexes. The SWR1 complex mediates the ATP-dependent exchange of histone H2A for the H2A variant HZT1 leading to transcriptional regulation of selected genes by chromatin remodeling. The INO80 complex remodels chromatin by shifting nucleosomes and is involved in DNA repair. Also involved in pre-rRNA processing. This chain is RuvB-like helicase 1 (RVB1), found in Mycosarcoma maydis (Corn smut fungus).